Reading from the N-terminus, the 263-residue chain is Proliferating cell nuclear antigen (263 aa).

The DNA-binding element occupies R61–K80.

Belongs to the PCNA family. Homotrimer. Forms a complex with activator 1 heteropentamer in the presence of ATP.

It localises to the nucleus. This protein is an auxiliary protein of DNA polymerase delta and is involved in the control of eukaryotic DNA replication by increasing the polymerase's processibility during elongation of the leading strand. This chain is Proliferating cell nuclear antigen (pcn-1), found in Caenorhabditis elegans.